We begin with the raw amino-acid sequence, 225 residues long: O-methyltransferase rstn1 (225 aa).

S-adenosyl-L-methionine-binding residues include Gln97 and His142.

Belongs to the methyltransferase superfamily.

It carries out the reaction desmethylrestrictinol + S-adenosyl-L-methionine = restrictinol + S-adenosyl-L-homocysteine + H(+). It functions in the pathway antifungal biosynthesis. Its function is as follows. O-methyltransferase; part of the gene cluster that mediates the biosynthesis of the tetrahydropyranyl antifungal agent restricticin that acts as an inhibitor of CYP51 and blocks the ergosterol biosynthesis. Within the pathway, rstn1 uses S-adenosylmethionine to methylate position C4 of desmethylrestrictinol to produce restrictinol. The highly reducing polyketide synthase rstn3, the short chain dehydrogenase rstn4, the cyclase rstn5, the FAD-dependent monooxygenase rstn6 and the enoylreductase rstn7 are required to generate the first stable intermediate desmethylrestrictinol. Rstn3 with rstn7 biosynthesize the first polyketide chain intermediate that is reduced by rstn4, followed by epoxidation by rstn6 before 6-endo cyclization via epoxide opening by rstn5 leads to desmethylrestrictinol. The methyltransferase rstn1 then catalyzes the C4 O-methylation of desmethylrestrictinol to produce restrictinol, and the nonribosomal peptide synthetase rstn8 catalyzes the C3 esterification of restrictinol with glycine that leads to restricticin. This chain is O-methyltransferase rstn1, found in Aspergillus nomiae NRRL (strain ATCC 15546 / NRRL 13137 / CBS 260.88 / M93).